We begin with the raw amino-acid sequence, 571 residues long: MASVAAWLPFARAAAIGWVPIATHPLPPPPMPKDRRKTDDEKLLINVSGRRFETWRNTLEKYPDTLLGSNEREFFYDEDCKEYFFDRDPDIFRHILNYYRTGKLHYPKHECLTSYDEELAFFGIMPDVIGDCCYEDYRDRKRENAERLMDDKLSENGDQNLQQLTNMRQKMWRAFENPHTSTSALVFYYVTGFFIAVSVMANVVETVPCGHRPGRAGTLPCGERYKIVFFCLDTACVMIFTAEYLLRLFAAPDRCKFVRSVMSIIDVVAIMPYYIGLGITDNDDVSGAFVTLRVFRVFRIFKFSRHSQGLRILGYTLKSCASELGFLVFSLAMAIIIFATVMFYAEKNVNGTNFTSIPAAFWYTIVTMTTLGYGDMVPETIAGKIVGGVCSLSGVLVIALPVPVIVSNFSRIYHQNQRADKRKAQRKARLARIRIAKASSGAAFVSKKKAAEARWAAQESGIELDDNYRDEDIFELQHHHLLRCLEKTTDREFVELEIPFNGQPKRPGSPSPMASPAHSTNSAAGLLQSCCGRCCSQRYQACGKYMPAASNAQNSQNNQPMDGTYLVEASF.

Asn-46 is a glycosylation site (N-linked (GlcNAc...) asparagine). Residues 186–204 (VFYYVTGFFIAVSVMANVV) traverse the membrane as a helical segment. The chain crosses the membrane as a helical span at residues 229-250 (FFCLDTACVMIFTAEYLLRLFA). The chain crosses the membrane as a helical span at residues 261–282 (VMSIIDVVAIMPYYIGLGITDN). Residues 290 to 308 (VTLRVFRVFRIFKFSRHSQ) form a helical membrane-spanning segment. A helical transmembrane segment spans residues 324 to 345 (LGFLVFSLAMAIIIFATVMFYA). 2 N-linked (GlcNAc...) asparagine glycosylation sites follow: Asn-350 and Asn-353. The Selectivity filter signature appears at 370-375 (TLGYGD). The helical transmembrane segment at 385-406 (IVGGVCSLSGVLVIALPVPVIV) threads the bilayer. N-linked (GlcNAc...) asparagine glycosylation occurs at Asn-408. The mediates dendritic targeting stretch occupies residues 474–489 (FELQHHHLLRCLEKTT). A disordered region spans residues 500 to 520 (FNGQPKRPGSPSPMASPAHST).

It belongs to the potassium channel family. D (Shal) (TC 1.A.1.2) subfamily. Shal sub-subfamily. Heterotetramer of potassium channel proteins. Interacts (via C-terminal dendritic targeting motif) with SIDL. Co-expressed with SIDL in the nervous system.

The protein localises to the membrane. It is found in the cell projection. The protein resides in the dendrite. It localises to the perikaryon. Mediates the voltage-dependent potassium ion permeability of excitable membranes. Assuming opened or closed conformations in response to the voltage difference across the membrane, the protein forms a potassium-selective channel through which potassium ions may pass in accordance with their electrochemical gradient. May play a role in the nervous system and in the regulation of beating frequency in pacemaker cells. The sequence is that of Potassium voltage-gated channel protein Shal (Shal) from Drosophila melanogaster (Fruit fly).